The following is a 362-amino-acid chain: DNA replication and repair protein RecF (362 aa).

ATP is bound at residue 30-37 (GDNGAGKT).

The protein belongs to the RecF family.

The protein resides in the cytoplasm. The RecF protein is involved in DNA metabolism; it is required for DNA replication and normal SOS inducibility. RecF binds preferentially to single-stranded, linear DNA. It also seems to bind ATP. The protein is DNA replication and repair protein RecF of Xanthomonas oryzae pv. oryzae (strain MAFF 311018).